A 260-amino-acid chain; its full sequence is Sodium channel modifier 1 (260 aa).

Positions 4 to 20 (KRDGDDSSQLNVLKKRR) match the Bipartite nuclear localization signal motif. The Matrin-type zinc finger occupies 42-74 (YACTVCHHRPVFNTIDMLSVHRTGKKHLGGLQR). Residues 143–260 (RNVYDPHSGP…EEEPPALPPS (118 aa)) form a disordered region. The span at 166-187 (PGPSQPHTSLHSPPTGPCSSPT) shows a compositional bias: polar residues. Positions 202 to 221 (KGEEKFRKEIADPERERNME) are enriched in basic and acidic residues. The span at 245 to 254 (VEFDSDEEEP) shows a compositional bias: acidic residues.

Component of the minor spliceosome, which splices U12-type introns.

Its subcellular location is the nucleus. It is found in the nucleoplasm. The protein localises to the nucleus speckle. In terms of biological role, as a component of the minor spliceosome, involved in the splicing of U12-type introns in pre-mRNAs. The chain is Sodium channel modifier 1 (scnm1) from Xenopus laevis (African clawed frog).